Consider the following 460-residue polypeptide: Elongation factor 1-alpha (460 aa).

Position 2 is a n,N,N-trimethylglycine (glycine 2). N6,N6-dimethyllysine; alternate is present on lysine 3. At lysine 3 the chain carries N6-methyllysine; alternate. Residues 6–241 (KTHINVVVIG…DAIEPPKRPT (236 aa)) enclose the tr-type G domain. The G1 stretch occupies residues 15-22 (GHVDSGKS). 15-22 (GHVDSGKS) is a GTP binding site. At lysine 31 the chain carries N6-methyllysine. Residues 71–75 (GITID) are G2. Lysine 80 carries the N6,N6,N6-trimethyllysine modification. The segment at 92–95 (DAPG) is G3. Residues 92 to 96 (DAPGH) and 154 to 157 (NKMD) contribute to the GTP site. The segment at 154–157 (NKMD) is G4. Residues 193-195 (SGF) form a G5 region. At lysine 317 the chain carries N6,N6-dimethyllysine; alternate. Position 317 is an N6-methyllysine; alternate (lysine 317). N6-methyllysine is present on lysine 391.

This sequence belongs to the TRAFAC class translation factor GTPase superfamily. Classic translation factor GTPase family. EF-Tu/EF-1A subfamily.

The protein resides in the cytoplasm. This protein promotes the GTP-dependent binding of aminoacyl-tRNA to the A-site of ribosomes during protein biosynthesis. This is Elongation factor 1-alpha (tef-1) from Neurospora crassa (strain ATCC 24698 / 74-OR23-1A / CBS 708.71 / DSM 1257 / FGSC 987).